The sequence spans 192 residues: Shikimate kinase (192 aa).

27–32 (GTGKTT) lines the ATP pocket. T31 is a binding site for Mg(2+). Substrate contacts are provided by D49, R73, and G95. ATP is bound at residue R133. R152 contributes to the substrate binding site.

It belongs to the shikimate kinase family. Monomer. Mg(2+) is required as a cofactor.

The protein localises to the cytoplasm. It carries out the reaction shikimate + ATP = 3-phosphoshikimate + ADP + H(+). It participates in metabolic intermediate biosynthesis; chorismate biosynthesis; chorismate from D-erythrose 4-phosphate and phosphoenolpyruvate: step 5/7. Functionally, catalyzes the specific phosphorylation of the 3-hydroxyl group of shikimic acid using ATP as a cosubstrate. The sequence is that of Shikimate kinase from Hahella chejuensis (strain KCTC 2396).